A 379-amino-acid polypeptide reads, in one-letter code: Alcohol dehydrogenase 1 (379 aa).

Positions 47, 49, 69, 99, 102, 105, 113, and 177 each coordinate Zn(2+). An alcohol contacts are provided by Thr-49 and His-69. An NAD(+)-binding site is contributed by Thr-49. Residues 202-207, Asp-226, Arg-231, Thr-272, Val-295, 295-297, Phe-322, and Arg-372 contribute to the NAD(+) site; these read GLGAVG and VGV.

Belongs to the zinc-containing alcohol dehydrogenase family. Homodimer. The cofactor is Zn(2+).

The protein localises to the cytoplasm. It carries out the reaction a primary alcohol + NAD(+) = an aldehyde + NADH + H(+). It catalyses the reaction a secondary alcohol + NAD(+) = a ketone + NADH + H(+). This is Alcohol dehydrogenase 1 (ADH1) from Cenchrus americanus (Pearl millet).